The following is a 456-amino-acid chain: Putative E3 ubiquitin-protein ligase XBAT31 (456 aa).

ANK repeat units lie at residues 45 to 74 (DRHS…NPDL), 78 to 107 (HKQT…NILM), 112 to 141 (NRRT…SSPV), 157 to 186 (KGAT…LVCA), and 194 to 224 (PGST…RLQR). An RING-type zinc finger spans residues 319–368 (CCICFEQVCTIEVKDCGHQMCAQCTLALCCHNKPNPTTSTVTPPVCPFCR).

The enzyme catalyses S-ubiquitinyl-[E2 ubiquitin-conjugating enzyme]-L-cysteine + [acceptor protein]-L-lysine = [E2 ubiquitin-conjugating enzyme]-L-cysteine + N(6)-ubiquitinyl-[acceptor protein]-L-lysine.. It participates in protein modification; protein ubiquitination. Its function is as follows. No E3 ubiquitin-protein ligase activity observed when associated with the E2 enzyme UBC8 in vitro. The sequence is that of Putative E3 ubiquitin-protein ligase XBAT31 (XBAT31) from Arabidopsis thaliana (Mouse-ear cress).